The sequence spans 104 residues: N(4)-acetylcytidine amidohydrolase (104 aa).

Residues Met-7–Gln-95 form the ASCH domain. Lys-22 (proton acceptor) is an active-site residue. Thr-25 acts as the Nucleophile in catalysis. Residue Glu-75 is the Proton donor of the active site.

The protein belongs to the N(4)-acetylcytidine amidohydrolase family.

The enzyme catalyses N(4)-acetylcytidine + H2O = cytidine + acetate + H(+). The catalysed reaction is N(4)-acetyl-2'-deoxycytidine + H2O = 2'-deoxycytidine + acetate + H(+). It carries out the reaction N(4)-acetylcytosine + H2O = cytosine + acetate + H(+). In terms of biological role, catalyzes the hydrolysis of N(4)-acetylcytidine (ac4C). This Vibrio atlanticus (strain LGP32) (Vibrio splendidus (strain Mel32)) protein is N(4)-acetylcytidine amidohydrolase.